We begin with the raw amino-acid sequence, 639 residues long: Tubulin--tyrosine ligase-like protein 12 (639 aa).

The region spanning 295–639 is the TTL domain; that stretch reads PQGHVFRVHC…TDNCHVTRII (345 aa). Residues 445–448, Lys-463, and Asp-465 contribute to the ATP site; that span reads SKYI.

This sequence belongs to the tubulin--tyrosine ligase family. Interacts with MAVS; the interaction prevents MAVS binding to TBK1 and IKBKE. Interacts (via N-terminus) with TBK1 (via protein kinase domain). Interacts (via TTL domain) with IKBKE (via protein kinase domain). Interacts with tubulin alpha. Interacts with histone H3 and histone H4 (when trimethylated at 'Lys-20' (H4K20me3)). Interacts with CBX3. Widely expressed with highest levels in brain, kidney, liver, lung, muscle and testis.

It localises to the cytoplasm. The protein localises to the midbody. The protein resides in the cytoskeleton. It is found in the microtubule organizing center. Its subcellular location is the centrosome. It localises to the spindle. The protein localises to the nucleus. Negatively regulates post-translational modifications of tubulin, including detyrosination of the C-terminus and polyglutamylation of glutamate residues. Also, indirectly promotes histone H4 trimethylation at 'Lys-20' (H4K20me3). Probably by controlling tubulin and/or histone H4 post-translational modifications, plays a role in mitosis and in maintaining chromosome number stability. During RNA virus-mediated infection, acts as a negative regulator of the RIG-I pathway by preventing MAVS binding to TBK1 and IKBKE. This chain is Tubulin--tyrosine ligase-like protein 12, found in Mus musculus (Mouse).